A 587-amino-acid polypeptide reads, in one-letter code: Estrogen receptor (587 aa).

The tract at residues 1 to 176 (MTLHTKTSGV…SMESTKETRY (176 aa)) is modulating (transactivation AF-1). 2 NR C4-type zinc fingers span residues 177-197 (CAVCNDYASGYHYGVWSCEGC) and 213-237 (CPATNQCTIDKNRRKSCQACRLRKC). The segment at residues 177–242 (CAVCNDYASG…RLRKCYEVGM (66 aa)) is a DNA-binding region (nuclear receptor). The segment at 243–302 (MKGGIRKDRRGGRVMKQKRQREEQDSRNGEASSTELRAPTLWASPLVVKHNKKNSPALSL) is hinge. Residues 248–277 (RKDRRGGRVMKQKRQREEQDSRNGEASSTE) are disordered. A compositionally biased stretch (basic residues) spans 249 to 261 (KDRRGGRVMKQKR). Positions 303–539 (TAEQMVSALL…DLLLEMLDAH (237 aa)) constitute an NR LBD domain. The segment at 303–587 (TAEQMVSALL…KEEENMQNTL (285 aa)) is transactivation AF-2.

The protein belongs to the nuclear hormone receptor family. NR3 subfamily. As to quaternary structure, binds DNA as a homodimer. Can form a heterodimer with ER-beta.

The protein resides in the nucleus. Its function is as follows. The steroid hormones and their receptors are involved in the regulation of eukaryotic gene expression and affect cellular proliferation and differentiation in target tissues. The protein is Estrogen receptor (ESR1) of Taeniopygia guttata (Zebra finch).